The chain runs to 159 residues: Phosphopantetheine adenylyltransferase (159 aa).

Threonine 10 contacts substrate. ATP-binding positions include 10-11 (TF) and histidine 18. Substrate contacts are provided by lysine 42, methionine 74, and arginine 88. Residues 89–91 (GLR), glutamate 99, and 124–130 (WSFISSS) contribute to the ATP site.

This sequence belongs to the bacterial CoaD family. In terms of assembly, homohexamer. It depends on Mg(2+) as a cofactor.

The protein localises to the cytoplasm. The enzyme catalyses (R)-4'-phosphopantetheine + ATP + H(+) = 3'-dephospho-CoA + diphosphate. It functions in the pathway cofactor biosynthesis; coenzyme A biosynthesis; CoA from (R)-pantothenate: step 4/5. Reversibly transfers an adenylyl group from ATP to 4'-phosphopantetheine, yielding dephospho-CoA (dPCoA) and pyrophosphate. The chain is Phosphopantetheine adenylyltransferase from Salmonella agona (strain SL483).